The following is a 357-amino-acid chain: 2-oxoglutarate-dependent dioxygenase 11 (357 aa).

In terms of domain architecture, Fe2OG dioxygenase spans 207–307 (QPRGLRMAYY…RISAALFHYP (101 aa)). Fe cation contacts are provided by His231, Asp233, and His288. Arg298 contributes to the 2-oxoglutarate binding site.

This sequence belongs to the iron/ascorbate-dependent oxidoreductase family. It depends on Fe(2+) as a cofactor. The cofactor is L-ascorbate. As to expression, expressed in shoots.

The protein localises to the cytoplasm. It catalyses the reaction melatonin + 2-oxoglutarate + O2 = 2-hydroxymelatonin + succinate + CO2. Functionally, involved in melatonin degradation. Catalyzes the hydroxylation of melatonin to produce 2-hydroxymelatonin. The polypeptide is 2-oxoglutarate-dependent dioxygenase 11 (Oryza sativa subsp. japonica (Rice)).